A 511-amino-acid chain; its full sequence is Cytochrome P450 26B1 (511 aa).

Cys-440 contributes to the heme binding site.

This sequence belongs to the cytochrome P450 family. Heme is required as a cofactor.

The protein localises to the endoplasmic reticulum membrane. It is found in the microsome membrane. It carries out the reaction all-trans-retinoate + reduced [NADPH--hemoprotein reductase] + O2 = all-trans-4-hydroxyretinoate + oxidized [NADPH--hemoprotein reductase] + H2O + H(+). The enzyme catalyses all-trans-retinoate + reduced [NADPH--hemoprotein reductase] + O2 = all-trans-18-hydroxyretinoate + oxidized [NADPH--hemoprotein reductase] + H2O + H(+). A cytochrome P450 monooxygenase involved in the metabolism of retinoates (RAs), the active metabolites of vitamin A, and critical signaling molecules in animals. RAs exist as at least four different isomers: all-trans-RA (atRA), 9-cis-RA, 13-cis-RA, and 9,13-dicis-RA, where atRA is considered to be the biologically active isomer, although 9-cis-RA and 13-cis-RA also have activity. Catalyzes the hydroxylation of atRA primarily at C-4 and C-18, thereby contributing to the regulation of atRA homeostasis and signaling. Hydroxylation of atRA limits its biological activity and initiates a degradative process leading to its eventual elimination. Involved in the convertion of atRA to all-trans-4-oxo-RA. Can oxidize all-trans-13,14-dihydroretinoate (DRA) to metabolites which could include all-trans-4-oxo-DRA, all-trans-4-hydroxy-DRA, all-trans-5,8-epoxy-DRA, and all-trans-18-hydroxy-DRA. This chain is Cytochrome P450 26B1 (cyp26b1), found in Xenopus tropicalis (Western clawed frog).